The chain runs to 70 residues: ATP synthase subunit epsilon, mitochondrial (70 aa).

This sequence belongs to the eukaryotic ATPase epsilon family. In terms of assembly, F-type ATPases have 2 components, CF(1) - the catalytic core - and CF(0) - the membrane proton channel. CF(1) has five subunits: alpha(3), beta(3), gamma(1), delta(1), epsilon(1). CF(0) has three main subunits: a, b and c.

It is found in the mitochondrion. It localises to the mitochondrion inner membrane. Mitochondrial membrane ATP synthase (F(1)F(0) ATP synthase or Complex V) produces ATP from ADP in the presence of a proton gradient across the membrane which is generated by electron transport complexes of the respiratory chain. F-type ATPases consist of two structural domains, F(1) - containing the extramembraneous catalytic core, and F(0) - containing the membrane proton channel, linked together by a central stalk and a peripheral stalk. During catalysis, ATP synthesis in the catalytic domain of F(1) is coupled via a rotary mechanism of the central stalk subunits to proton translocation. Part of the complex F(1) domain and of the central stalk which is part of the complex rotary element. Rotation of the central stalk against the surrounding alpha(3)beta(3) subunits leads to hydrolysis of ATP in three separate catalytic sites on the beta subunits. In Zea mays (Maize), this protein is ATP synthase subunit epsilon, mitochondrial.